The sequence spans 269 residues: MANYIVGDIQGCFDELQQLLKQAEFNSQLDTLWFAGDLVARGPKSLETLRFVYQLGDAARVVLGNHDLHLLSVALGHHSAKRRDQTQAVLDAPDAAPLLDWLRQQPLLAEHQEFVLCHAGISPQWDLATARQAAQEVESVLRSPEWSTLIEQMYSDQPDAWHPTLQGIDRLRYIVNAFTRMRFCFPDGRLDMQCKLPPKEVTDGSLLPWFQLPQRIALEKTVIFGHWAALEGYVSETVIGLDTGCVWGGTLTMLRWEDKHYFSQAALPA.

It belongs to the Ap4A hydrolase family.

It carries out the reaction P(1),P(4)-bis(5'-adenosyl) tetraphosphate + H2O = 2 ADP + 2 H(+). Its function is as follows. Hydrolyzes diadenosine 5',5'''-P1,P4-tetraphosphate to yield ADP. This is Bis(5'-nucleosyl)-tetraphosphatase, symmetrical from Vibrio cholerae serotype O1 (strain ATCC 39541 / Classical Ogawa 395 / O395).